A 447-amino-acid chain; its full sequence is Dual specificity protein phosphatase CDC14C (447 aa).

Residues 14 to 168 form an a region; sequence PQDDVYVDIT…AMQYGFLNFN (155 aa). The segment at 169–182 is linker; sequence SFNLDEYEHYEKAE. Residues 183-349 are b; that stretch reads NGDLNWIIPD…EGDYFRQRLK (167 aa). Residues 184-344 form the Tyrosine-protein phosphatase domain; the sequence is GDLNWIIPDR…TSLWLEGDYF (161 aa). The active-site Phosphocysteine intermediate is the C284. Residues 426–446 form a helical membrane-spanning segment; it reads FTLCSVVIWWIVCDYILPILL.

It belongs to the protein-tyrosine phosphatase family. Non-receptor class CDC14 subfamily.

The protein resides in the endoplasmic reticulum membrane. The enzyme catalyses O-phospho-L-tyrosyl-[protein] + H2O = L-tyrosyl-[protein] + phosphate. The catalysed reaction is O-phospho-L-seryl-[protein] + H2O = L-seryl-[protein] + phosphate. It carries out the reaction O-phospho-L-threonyl-[protein] + H2O = L-threonyl-[protein] + phosphate. Its function is as follows. Dual-specificity phosphatase. Preferentially dephosphorylates proteins modified by proline-directed kinases. The protein is Dual specificity protein phosphatase CDC14C of Homo sapiens (Human).